Here is a 293-residue protein sequence, read N- to C-terminus: N-acetylneuraminate lyase (293 aa).

2 residues coordinate aceneuramate: Ser48 and Ser49. Catalysis depends on Tyr137, which acts as the Proton donor. Lys165 acts as the Schiff-base intermediate with substrate in catalysis. The aceneuramate site is built by Thr167, Gly189, Asp191, Glu192, and Ser208.

This sequence belongs to the DapA family. NanA subfamily. In terms of assembly, homotetramer.

It is found in the cytoplasm. The catalysed reaction is aceneuramate = aldehydo-N-acetyl-D-mannosamine + pyruvate. Its pathway is amino-sugar metabolism; N-acetylneuraminate degradation; D-fructose 6-phosphate from N-acetylneuraminate: step 1/5. Its function is as follows. Catalyzes the reversible aldol cleavage of N-acetylneuraminic acid (sialic acid; Neu5Ac) to form pyruvate and N-acetylmannosamine (ManNAc) via a Schiff base intermediate. The protein is N-acetylneuraminate lyase of Staphylococcus aureus (strain bovine RF122 / ET3-1).